Here is an 885-residue protein sequence, read N- to C-terminus: Leucine--tRNA ligase (885 aa).

A 'HIGH' region motif is present at residues 48–58; sequence PYPSGKLHMGH. Residues 639–643 carry the 'KMSKS' region motif; sequence TMSKS. Lysine 642 serves as a coordination point for ATP.

It belongs to the class-I aminoacyl-tRNA synthetase family.

Its subcellular location is the cytoplasm. It catalyses the reaction tRNA(Leu) + L-leucine + ATP = L-leucyl-tRNA(Leu) + AMP + diphosphate. The protein is Leucine--tRNA ligase of Bordetella petrii (strain ATCC BAA-461 / DSM 12804 / CCUG 43448).